Here is a 303-residue protein sequence, read N- to C-terminus: Protoheme IX farnesyltransferase (303 aa).

9 helical membrane-spanning segments follow: residues 26–46, 48–68, 98–118, 120–140, 148–168, 174–194, 221–241, 244–264, and 278–298; these read VVALMLLTSLIGMLLAVPGMV, IDILILGNLGIALCAGSAAAV, AILFAAILGLAGMAILMVWVN, LTAWLTLASLVGYAFIYTFWL, IVIGGLAGAAPPLLGWVAVTG, ALLLVLIIFAWTPPHFWALAV, ILLYTFILIAVTLLPYATHML, LYLLGAVVLGIGFLYYAVAMM, and YSIVYLMALFVVMLLDHYLLP.

The protein belongs to the UbiA prenyltransferase family. Protoheme IX farnesyltransferase subfamily.

It localises to the cell inner membrane. It catalyses the reaction heme b + (2E,6E)-farnesyl diphosphate + H2O = Fe(II)-heme o + diphosphate. It participates in porphyrin-containing compound metabolism; heme O biosynthesis; heme O from protoheme: step 1/1. Converts heme B (protoheme IX) to heme O by substitution of the vinyl group on carbon 2 of heme B porphyrin ring with a hydroxyethyl farnesyl side group. The protein is Protoheme IX farnesyltransferase of Saccharophagus degradans (strain 2-40 / ATCC 43961 / DSM 17024).